The primary structure comprises 265 residues: MNITTISHLRKYKQRQQKFAAITAYDAAFASLFEQNGIQVMLVGDSLGMTIQGNDSTLPVTLEDMIYHTRCVRRGAPYCLLIADLPFMCYATLYQAYDNAAALMRAGANIVKLEGGGCWVTKIVRCLTDRAVPVCCHLGLTPQSVNILGGYKIQGRDKDSADRILSESIALELAGAQMLVLECVPITLSERIADVLTIPVIGIGAGPVTDGQILVMQDILGITGNRIPSFAKNFLTDSRDIPTAIQLYVQEVETGKFPAVQHYFS.

Mg(2+) contacts are provided by aspartate 45 and aspartate 84. 3-methyl-2-oxobutanoate is bound by residues aspartate 45–serine 46, aspartate 84, and lysine 112. Glutamate 114 provides a ligand contact to Mg(2+). The active-site Proton acceptor is glutamate 182.

It belongs to the PanB family. Homodecamer; pentamer of dimers. Requires Mg(2+) as cofactor.

It localises to the cytoplasm. The enzyme catalyses 3-methyl-2-oxobutanoate + (6R)-5,10-methylene-5,6,7,8-tetrahydrofolate + H2O = 2-dehydropantoate + (6S)-5,6,7,8-tetrahydrofolate. It functions in the pathway cofactor biosynthesis; (R)-pantothenate biosynthesis; (R)-pantoate from 3-methyl-2-oxobutanoate: step 1/2. In terms of biological role, catalyzes the reversible reaction in which hydroxymethyl group from 5,10-methylenetetrahydrofolate is transferred onto alpha-ketoisovalerate to form ketopantoate. The polypeptide is 3-methyl-2-oxobutanoate hydroxymethyltransferase (Baumannia cicadellinicola subsp. Homalodisca coagulata).